We begin with the raw amino-acid sequence, 693 residues long: MATSGANGPGSATASASNPRKFSEKIALQKQRQAEETAAFEEVMMDIGSTRLQAQKLRLAYTRSSHYGGSLPNVNQIGCGLAEFQSPLHSPLDSSRSTRHHGLVERVQRDPRRMVSPLRRYARHIDSSPYSPAYLSPPPESSWRRTMPWGSFPAEKGQLFRLPSALNRTSSDSALHTSVMNPSPQDTYPSPAAPSVLPSRRGGCLDGETDSKVPAIEENLLDDKHLLKPWDAKKLSSSSSRPRSCEVPGINIFPSPDQPATVPVLPPAMNTGGSLPDLTNLHFPPPLPTPLDPEETAYPSLSGGSSTSNLTHTMTHLGISGGLALGPGYDAPGLHSPLSHPSFQSSLSNPNLQASLSSPQPQLQGSHSHPSLPASSLARHALPTTSLGHPSLSAPALSSSSSSSSASSPVLGAPAYPASAPGASPRHRRVPLSPLSLPAGPADARRSQQQLPKQFSPTMSPTLSSITQGVALDTSKLPTDQRLPPYPYSPPSLVLPTQQPTPKPLQQPGLPSQACSVQPSGGQPPGRQLQYGTLYPPGPSGHGQQSYHRSMSDFSLGNLEQFNMENPSTSLALDPPGFSEGPGFLGGEGPVSGPQDPHALNHQNVTHCSRHGSGPNVILTGDASPGFSKEIAAALAGVPGFEVSAAGLGLGLGLEEELRMEPLGLEGLSMLSDPCALLPDPAVEDSFRSDRLQ.

A compositionally biased stretch (polar residues) spans 1 to 20 (MATSGANGPGSATASASNPR). The disordered stretch occupies residues 1–30 (MATSGANGPGSATASASNPRKFSEKIALQK). Ala-2 carries the post-translational modification N-acetylalanine. Arg-51 is subject to Asymmetric dimethylarginine; by PRMT6. Phosphoserine occurs at positions 70, 86, and 90. Asymmetric dimethylarginine; by PRMT6 is present on residues Arg-99, Arg-120, and Arg-123. Residue Ser-136 is modified to Phosphoserine. Asymmetric dimethylarginine; by PRMT6 is present on residues Arg-161 and Arg-168. Thr-169 carries the phosphothreonine modification. Residue Ser-171 is modified to Phosphoserine. Over residues 174-188 (ALHTSVMNPSPQDTY) the composition is skewed to polar residues. The interval 174-210 (ALHTSVMNPSPQDTYPSPAAPSVLPSRRGGCLDGETD) is disordered. The interval 209 to 215 (TDSKVPA) is required for interaction with COP1. A Glycyl lysine isopeptide (Lys-Gly) (interchain with G-Cter in SUMO2) cross-link involves residue Lys-234. Positions 271 to 287 (TGGSLPDLTNLHFPPPL) match the Nuclear export signal motif. 3 disordered regions span residues 271 to 307 (TGGS…GSST), 335 to 463 (HSPL…SPTL), and 476 to 548 (KLPT…QSYH). Ser-274 is subject to Phosphoserine; by MARK2. Phosphoserine is present on Ser-306. Positions 339–351 (SHPSFQSSLSNPN) are enriched in polar residues. Composition is skewed to low complexity over residues 352 to 378 (LQAS…SSLA) and 386 to 424 (SLGH…PGAS). 4 positions are modified to phosphoserine: Ser-368, Ser-393, Ser-433, and Ser-456. Over residues 447–463 (SQQQLPKQFSPTMSPTL) the composition is skewed to polar residues. Tyr-488 is modified (phosphotyrosine). Phosphoserine is present on residues Ser-489 and Ser-492. Thr-501 bears the Phosphothreonine mark. 2 positions are modified to phosphoserine: Ser-613 and Ser-624.

This sequence belongs to the TORC family. As to quaternary structure, binds, as a tetramer, through its N-terminal region, with the bZIP domain of CREB1. 'Arg-314' in the bZIP domain of CREB1 is essential for this interaction. Interaction, via its C-terminal, with TAF4, enhances recruitment of TAF4 to CREB1. Interacts with SIK2. Interacts with 14-3-3 proteins, YWHAB and YWHAG. Interacts (probably when phosphorylated at Ser-171) with YWHAE. Interacts with calmodulin-dependent catalytic subunit PPP3CA/calcineurin A. Interaction with COP1 mediates nuclear export and degradation of CRTC2. In terms of processing, phosphorylation/dephosphorylation states of Ser-171 are required for regulating transduction of CREB activity. CRTCs/TORCs are inactive when phosphorylated, and active when dephosphorylated at this site. This primary site of phosphorylation, is regulated by cAMP and calcium levels and is dependent on the phosphorylation of SIKs (SIK1 and SIK2) by LKB1. Following adenylyl cyclase activation, dephosphorylated at Ser-171 by PPP3CA/calcineurin A resulting in CRTC2 dissociation from 14-3-3 proteins and PPP3CA. Both insulin and AMPK increase this phosphorylation of CRTC2 while glucagon suppresses it. Phosphorylation at Ser-274 by MARK2 is induced under low glucose conditions and dephosphorylated in response to glucose influx. Phosphorylation at Ser-274 promotes interaction with 14-3-3 proteins and translocation to the cytoplasm. Asymmetric dimethylation of arginine resisues by PRMT6 enhances the association of CRTC2 with CREB on the promoters of gluconeogenic genes.

It localises to the cytoplasm. The protein localises to the nucleus. Its function is as follows. Transcriptional coactivator for CREB1 which activates transcription through both consensus and variant cAMP response element (CRE) sites. Acts as a coactivator, in the SIK/TORC signaling pathway, being active when dephosphorylated and acts independently of CREB1 'Ser-133' phosphorylation. Enhances the interaction of CREB1 with TAF4. Regulates gluconeogenesis as a component of the LKB1/AMPK/TORC2 signaling pathway. Regulates the expression of specific genes such as the steroidogenic gene, StAR. Potent coactivator of PPARGC1A and inducer of mitochondrial biogenesis in muscle cells. The sequence is that of CREB-regulated transcription coactivator 2 (CRTC2) from Bos taurus (Bovine).